The sequence spans 218 residues: DNA-binding protein HU 2 (218 aa).

The bacterial histone-like domain stretch occupies residues 1–91 (MNKAQLVEAI…QGFKDLVSGS (91 aa)). The segment at 101 to 218 (VKKAPKGSLS…TAKKATARKK (118 aa)) is disordered. A degenerate repeats region region spans residues 118 to 218 (KAAGKKAAAK…TAKKATARKK (101 aa)). The segment covering 127-161 (KKATGAAKKTTGAAKKTSAAAKKTTAKKTTGAAKT) has biased composition (low complexity). The span at 162–172 (TAKKTTAKKSA) shows a compositional bias: basic residues. A compositionally biased stretch (low complexity) spans 173–182 (AKTTTAAAKK). A compositionally biased stretch (basic residues) spans 183–218 (TAAKKAPAKKATAKKAPAKKSTARKTTAKKATARKK).

Belongs to the bacterial histone-like protein family. Long actinobacterial subfamily. In terms of assembly, homodimer.

The protein resides in the cytoplasm. The protein localises to the nucleoid. In terms of biological role, histone-like DNA-binding protein which is capable of wrapping DNA to stabilize it, and thus to prevent its denaturation under extreme environmental conditions. The protein is DNA-binding protein HU 2 (hup2) of Streptomyces coelicolor (strain ATCC BAA-471 / A3(2) / M145).